Here is a 449-residue protein sequence, read N- to C-terminus: 23S rRNA (uracil(1939)-C(5))-methyltransferase RlmD (449 aa).

Residues 12-70 (SKQLSAKQSFSVHQLDHLGAGIAQHQGKVVFIPGALPSETVQAQLTEQKKNYARAKLIK) form the TRAM domain. [4Fe-4S] cluster is bound by residues Cys83, Cys89, Cys92, and Cys170. Residues Gln282, Phe311, Asn316, Glu332, Asp359, and Asp379 each contribute to the S-adenosyl-L-methionine site. The active-site Nucleophile is Cys405.

This sequence belongs to the class I-like SAM-binding methyltransferase superfamily. RNA M5U methyltransferase family. RlmD subfamily.

It carries out the reaction uridine(1939) in 23S rRNA + S-adenosyl-L-methionine = 5-methyluridine(1939) in 23S rRNA + S-adenosyl-L-homocysteine + H(+). Catalyzes the formation of 5-methyl-uridine at position 1939 (m5U1939) in 23S rRNA. This is 23S rRNA (uracil(1939)-C(5))-methyltransferase RlmD from Shewanella sp. (strain MR-4).